We begin with the raw amino-acid sequence, 362 residues long: F-box protein At1g54550 (362 aa).

The region spanning Met-1–Ala-47 is the F-box domain.

The chain is F-box protein At1g54550 from Arabidopsis thaliana (Mouse-ear cress).